The chain runs to 150 residues: Globin-1 (150 aa).

The region spanning 11–150 (ALTAAEKATI…MICILLRSSY (140 aa)) is the Globin domain. Heme b contacts are provided by His-74 and His-106.

It belongs to the globin family. As to quaternary structure, monomer.

This chain is Globin-1, found in Petromyzon marinus (Sea lamprey).